Consider the following 243-residue polypeptide: UPF0702 transmembrane protein YkjA (243 aa).

The next 3 membrane-spanning stretches (helical) occupy residues 3 to 23 (WMVWVFLLKPVIVFSIAYILF), 34 to 54 (MNNFDLLLTFAIGTIISEPIL), and 58 to 78 (LPMSIYYAGAFLVLYLIMSKL).

The protein belongs to the UPF0702 family.

It localises to the cell membrane. This is UPF0702 transmembrane protein YkjA (ykjA) from Bacillus subtilis (strain 168).